The chain runs to 622 residues: Serine/threonine-protein kinase MAK (622 aa).

Residues 4–284 (YTTMRQLGDG…ASQALKHPYF (281 aa)) enclose the Protein kinase domain. Residues 10–18 (LGDGTYGSV) and lysine 33 each bind ATP. Aspartate 125 acts as the Proton acceptor in catalysis. Threonine 157 is subject to Phosphothreonine; by autocatalysis. Residue tyrosine 159 is modified to Phosphotyrosine; by autocatalysis. Positions 301–373 (QTLHKQLQPP…HHKQPQTMFP (73 aa)) are disordered.

Belongs to the protein kinase superfamily. CMGC Ser/Thr protein kinase family. CDC2/CDKX subfamily. Interacts with RP1. Interacts with AR and CDK20. Found in a complex containing MAK, AR and NCOA3. Interacts with FZR1 (via WD repeats). The cofactor is Mg(2+). In terms of processing, autophosphorylated. Phosphorylated on serine and threonine residues. In terms of tissue distribution, expressed mainly in testicular cells at and after meiosis.

The protein localises to the nucleus. Its subcellular location is the cytoplasm. It is found in the cytoskeleton. It localises to the microtubule organizing center. The protein resides in the centrosome. The protein localises to the spindle. Its subcellular location is the midbody. It is found in the cell projection. It localises to the cilium. The protein resides in the photoreceptor outer segment. The protein localises to the photoreceptor inner segment. The catalysed reaction is L-seryl-[protein] + ATP = O-phospho-L-seryl-[protein] + ADP + H(+). It carries out the reaction L-threonyl-[protein] + ATP = O-phospho-L-threonyl-[protein] + ADP + H(+). Functionally, essential for the regulation of ciliary length and required for the long-term survival of photoreceptors. Could play an important function in spermatogenesis. Phosphorylates FZR1 in a cell cycle-dependent manner. Plays a role in the transcriptional coactivation of AR. This Rattus norvegicus (Rat) protein is Serine/threonine-protein kinase MAK (Mak).